Reading from the N-terminus, the 384-residue chain is S-adenosylmethionine synthase (384 aa).

His15 contacts ATP. Residue Asp17 coordinates Mg(2+). A K(+)-binding site is contributed by Glu43. Positions 56 and 99 each coordinate L-methionine. Residues 99-109 are flexible loop; that stretch reads QSPDINQGVDR. ATP contacts are provided by residues 164 to 166, 231 to 232, Asp240, 246 to 247, Ala263, and Lys267; these read DAK, RF, and RK. Residue Asp240 coordinates L-methionine. Lys271 contacts L-methionine.

This sequence belongs to the AdoMet synthase family. Homotetramer; dimer of dimers. The cofactor is Mg(2+). K(+) is required as a cofactor.

The protein localises to the cytoplasm. The catalysed reaction is L-methionine + ATP + H2O = S-adenosyl-L-methionine + phosphate + diphosphate. It participates in amino-acid biosynthesis; S-adenosyl-L-methionine biosynthesis; S-adenosyl-L-methionine from L-methionine: step 1/1. In terms of biological role, catalyzes the formation of S-adenosylmethionine (AdoMet) from methionine and ATP. The overall synthetic reaction is composed of two sequential steps, AdoMet formation and the subsequent tripolyphosphate hydrolysis which occurs prior to release of AdoMet from the enzyme. The protein is S-adenosylmethionine synthase of Shewanella woodyi (strain ATCC 51908 / MS32).